The following is a 493-amino-acid chain: Keratin, type II cuticular Hb3 (493 aa).

Residues 1-111 (MTCGFNSIGC…PNAQCVKQEE (111 aa)) form a head region. Positions 111–422 (EKEQIKSLNS…RLLEGEEQRL (312 aa)) constitute an IF rod domain. Residues 112-146 (KEQIKSLNSRFAAFIDKVRFLEQQNKLLETKLQFY) are coil 1A. Residues 147–156 (QNRECCQSNL) are linker 1. A coil 1B region spans residues 157 to 257 (EPLFAGYIET…YEEEIRILQS (101 aa)). Residue lysine 217 forms a Glycyl lysine isopeptide (Lys-Gly) (interchain with G-Cter in SUMO1) linkage. The segment at 258–274 (HISDTSVVVKLDNSRDL) is linker 12. A coil 2 region spans residues 275-418 (NMDCIVAEIK…ATYRRLLEGE (144 aa)). Residues 419–493 (EQRLCEGVEA…GGGSCGQGRH (75 aa)) are tail.

Belongs to the intermediate filament family. In terms of assembly, heterotetramer of two type I and two type II keratins. Synthesis begins in the cortex 10-15 cell layers above the apex of the dermal papilla and ends abruptly in the middle of the cortex.

This is Keratin, type II cuticular Hb3 (KRT83) from Homo sapiens (Human).